Here is a 387-residue protein sequence, read N- to C-terminus: MAQKKDYYEILGVPRNATQEEIKRAYRRLAKQYHPDANPGNKEAEEKFKEINEAYEVLSDPEKRRKYDQFGHAAFDPTYGAQGGGFSGGFTGGFADFDFGSFGDIFEDLFEGFDIFGSSRRRKEAPRKGADIQVDLELTLKESVFGCEKEIPIYRTEKCSVCGGSGVRPGATPVRCQKCGGTGQIRSRQATFFGEFTTIKTCDACGGVGTIITDPCRECGGTGTVRRQRRVKINIPAGIDDGQVITLGGEGESGIKGGPNGDLHIRIKIAPHPVFKRVGQDLYVEVPITFVNAALGGEIEIPTLDGKTKIRVEPGTQNGDEVRIKGKGVPYLRGRGRGDLVVKFVIEVPKKLSEKQKELLRKFEELSSEEGYEKRKHFWDRIREAFS.

Residues 6-71 (DYYEILGVPR…EKRRKYDQFG (66 aa)) form the J domain. Residues 146–228 (GCEKEIPIYR…CGGTGTVRRQ (83 aa)) form a CR-type zinc finger. C159, C162, C176, C179, C202, C205, C216, and C219 together coordinate Zn(2+). 4 CXXCXGXG motif repeats span residues 159–166 (CSVCGGSG), 176–183 (CQKCGGTG), 202–209 (CDACGGVG), and 216–223 (CRECGGTG).

Belongs to the DnaJ family. As to quaternary structure, homodimer. Zn(2+) serves as cofactor.

Its subcellular location is the cytoplasm. In terms of biological role, participates actively in the response to hyperosmotic and heat shock by preventing the aggregation of stress-denatured proteins and by disaggregating proteins, also in an autonomous, DnaK-independent fashion. Unfolded proteins bind initially to DnaJ; upon interaction with the DnaJ-bound protein, DnaK hydrolyzes its bound ATP, resulting in the formation of a stable complex. GrpE releases ADP from DnaK; ATP binding to DnaK triggers the release of the substrate protein, thus completing the reaction cycle. Several rounds of ATP-dependent interactions between DnaJ, DnaK and GrpE are required for fully efficient folding. Also involved, together with DnaK and GrpE, in the DNA replication of plasmids through activation of initiation proteins. The protein is Chaperone protein DnaJ of Caldicellulosiruptor saccharolyticus (strain ATCC 43494 / DSM 8903 / Tp8T 6331).